Consider the following 1046-residue polypeptide: Probable inorganic carbon transporter subunit DabA1 (1046 aa).

Zn(2+) contacts are provided by Cys-462, Asp-464, His-721, and Cys-736.

It belongs to the inorganic carbon transporter (TC 9.A.2) DabA family. In terms of assembly, forms a complex with DabB1. Zn(2+) is required as a cofactor.

The protein resides in the cell inner membrane. In terms of biological role, part of an energy-coupled inorganic carbon pump. The chain is Probable inorganic carbon transporter subunit DabA1 from Halothiobacillus neapolitanus (strain ATCC 23641 / c2) (Thiobacillus neapolitanus).